Reading from the N-terminus, the 338-residue chain is Phosphoribosylformylglycinamidine cyclo-ligase (338 aa).

The protein belongs to the AIR synthase family.

Its subcellular location is the cytoplasm. It carries out the reaction 2-formamido-N(1)-(5-O-phospho-beta-D-ribosyl)acetamidine + ATP = 5-amino-1-(5-phospho-beta-D-ribosyl)imidazole + ADP + phosphate + H(+). The protein operates within purine metabolism; IMP biosynthesis via de novo pathway; 5-amino-1-(5-phospho-D-ribosyl)imidazole from N(2)-formyl-N(1)-(5-phospho-D-ribosyl)glycinamide: step 2/2. The sequence is that of Phosphoribosylformylglycinamidine cyclo-ligase from Thermoplasma volcanium (strain ATCC 51530 / DSM 4299 / JCM 9571 / NBRC 15438 / GSS1).